The following is a 77-amino-acid chain: MSINIKDLIMKIAKENKIALNMDNLNIELKSLGIDSLSAMNLIMKIEDQIGVQLPDEKLLKIKNLRDLINAFEDVLK.

The Carrier domain occupies 1 to 76; sequence MSINIKDLIM…DLINAFEDVL (76 aa). Ser36 is subject to O-(pantetheine 4'-phosphoryl)serine.

In terms of processing, 4'-phosphopantetheine is transferred from CoA to a specific serine of the apo-ACP-like protein.

It functions in the pathway lipid metabolism; fatty acid biosynthesis. Carrier of the growing fatty acid chain in fatty acid biosynthesis. The sequence is that of Acyl carrier protein homolog from Ureaplasma parvum serovar 3 (strain ATCC 700970).